The following is a 249-amino-acid chain: DNA repair protein RecO (249 aa).

This sequence belongs to the RecO family.

Functionally, involved in DNA repair and RecF pathway recombination. This is DNA repair protein RecO from Rhodopseudomonas palustris (strain HaA2).